The primary structure comprises 808 residues: Probable phosphoketolase 1 (808 aa).

The protein belongs to the XFP family. The cofactor is thiamine diphosphate.

The sequence is that of Probable phosphoketolase 1 from Nostoc sp. (strain PCC 7120 / SAG 25.82 / UTEX 2576).